Reading from the N-terminus, the 545-residue chain is SLAIN motif-containing protein 1 (545 aa).

Residues 14–53 adopt a coiled-coil conformation; sequence TTNGLVANAELEVKKLQELVRKLEKQNEQLRNRASAVSNC. Low complexity-rich tracts occupy residues 268 to 286 and 466 to 481; these read TTSTCSSVSRPRSSFSLYS and IPSSTSLQSLSSSGIP. Disordered regions lie at residues 268-342 and 461-526; these read TTST…IRDC and QGGS…LQPP. The span at 503-522 shows a compositional bias: polar residues; it reads STANGSSIPRSKIAQPQRSF.

Belongs to the SLAIN motif-containing family.

It localises to the cytoplasm. It is found in the cytoskeleton. Functionally, microtubule plus-end tracking protein that might be involved in the regulation of cytoplasmic microtubule dynamics, microtubule organization and microtubule elongation. This chain is SLAIN motif-containing protein 1 (slain1), found in Xenopus tropicalis (Western clawed frog).